Here is a 977-residue protein sequence, read N- to C-terminus: Kinesin-like protein KIN-7L, chloroplastic (977 aa).

The segment covering 1–12 (MGSKQVSKTRNG) has biased composition (polar residues). A disordered region spans residues 1–66 (MGSKQVSKTR…PPKPLQSKEN (66 aa)). 2 stretches are compositionally biased toward low complexity: residues 22–31 (SSASSTTSSS) and 38–54 (SVDSHSSPTSSSVRSKP). Residues 66 to 385 (NVTVTVRFRP…LKFAHRAKHI (320 aa)) form the Kinesin motor domain. 146 to 153 (GVTSSGKT) is an ATP binding site. Positions 386–471 (EIQAAQNKII…LTKLILVSNK (86 aa)) form a coiled coil. Positions 549-589 (DSSLGGSSLSDKSSAVKSNSTPSTPQGEGSDFHTESRLSEG) are disordered. Low complexity predominate over residues 551–561 (SLGGSSLSDKS). Polar residues predominate over residues 563-575 (AVKSNSTPSTPQG). 2 coiled-coil regions span residues 626-688 (MEIL…GKQI) and 732-942 (IQEQ…LENE). Positions 864–876 (SSVTTPQGKTGNL) are enriched in polar residues. 2 disordered regions span residues 864–891 (SSVTTPQGKTGNLRNGRRESVSKRKEQE) and 958–977 (AANSGLSDSVSETRIEHFGT). Positions 879 to 891 (GRRESVSKRKEQE) are enriched in basic and acidic residues. The span at 958 to 967 (AANSGLSDSV) shows a compositional bias: polar residues. The segment covering 968-977 (SETRIEHFGT) has biased composition (basic and acidic residues).

It belongs to the TRAFAC class myosin-kinesin ATPase superfamily. Kinesin family. KIN-7 subfamily.

It is found in the plastid. The protein localises to the chloroplast. The protein is Kinesin-like protein KIN-7L, chloroplastic of Arabidopsis thaliana (Mouse-ear cress).